Here is a 113-residue protein sequence, read N- to C-terminus: UPF0342 protein SpyM3_0545 (113 aa).

This sequence belongs to the UPF0342 family.

The polypeptide is UPF0342 protein SpyM3_0545 (Streptococcus pyogenes serotype M3 (strain ATCC BAA-595 / MGAS315)).